The sequence spans 530 residues: 5-aminolevulinate synthase, mitochondrial (530 aa).

The N-terminal 26 residues, 1–26, are a transit peptide targeting the mitochondrion; the sequence is MFRPVLKVRPSFSYPYSIVSSRSVRL. Substrate is bound by residues Arg73, Ser186, and Lys205. Residues Ser238, His266, and Thr316 each contribute to the pyridoxal 5'-phosphate site. Lys319 is an active-site residue. At Lys319 the chain carries N6-(pyridoxal phosphate)lysine. 2 residues coordinate pyridoxal 5'-phosphate: Thr348 and Thr349. Thr434 lines the substrate pocket.

Belongs to the class-II pyridoxal-phosphate-dependent aminotransferase family. Homodimer. Pyridoxal 5'-phosphate is required as a cofactor.

Its subcellular location is the mitochondrion matrix. The enzyme catalyses succinyl-CoA + glycine + H(+) = 5-aminolevulinate + CO2 + CoA. The protein operates within porphyrin-containing compound metabolism; protoporphyrin-IX biosynthesis; 5-aminolevulinate from glycine: step 1/1. In terms of biological role, catalyzes the synthesis of 5-aminolevulinate (ALA) from succinyl-CoA and glycine, the first and rate-limiting step in heme biosynthesis. The polypeptide is 5-aminolevulinate synthase, mitochondrial (HEM1) (Candida glabrata (strain ATCC 2001 / BCRC 20586 / JCM 3761 / NBRC 0622 / NRRL Y-65 / CBS 138) (Yeast)).